The primary structure comprises 493 residues: Ribose import ATP-binding protein RbsA (493 aa).

ABC transporter domains follow at residues 5–241 and 252–491; these read LKIS…VGRR and EKGE…AAAI. Residue 37–44 coordinates ATP; sequence GENGAGKS.

It belongs to the ABC transporter superfamily. Ribose importer (TC 3.A.1.2.1) family. In terms of assembly, the complex is composed of an ATP-binding protein (RbsA), two transmembrane proteins (RbsC) and a solute-binding protein (RbsB).

It localises to the cell inner membrane. The enzyme catalyses D-ribose(out) + ATP + H2O = D-ribose(in) + ADP + phosphate + H(+). Functionally, part of the ABC transporter complex RbsABC involved in ribose import. Responsible for energy coupling to the transport system. The chain is Ribose import ATP-binding protein RbsA from Haemophilus influenzae (strain ATCC 51907 / DSM 11121 / KW20 / Rd).